A 249-amino-acid chain; its full sequence is Eukaryotic translation initiation factor 3 subunit K (249 aa).

The PCI domain occupies 46–222 (FDCYANLALL…VKVPSNKENE (177 aa)).

It belongs to the eIF-3 subunit K family. As to quaternary structure, component of the eukaryotic translation initiation factor 3 (eIF-3) complex.

The protein localises to the cytoplasm. Component of the eukaryotic translation initiation factor 3 (eIF-3) complex, which is involved in protein synthesis of a specialized repertoire of mRNAs and, together with other initiation factors, stimulates binding of mRNA and methionyl-tRNAi to the 40S ribosome. The eIF-3 complex specifically targets and initiates translation of a subset of mRNAs involved in cell proliferation. The sequence is that of Eukaryotic translation initiation factor 3 subunit K from Aspergillus clavatus (strain ATCC 1007 / CBS 513.65 / DSM 816 / NCTC 3887 / NRRL 1 / QM 1276 / 107).